We begin with the raw amino-acid sequence, 123 residues long: Hydrogenase maturation factor HypA (123 aa).

His2 provides a ligand contact to Ni(2+). Positions 77, 80, 96, and 99 each coordinate Zn(2+).

Belongs to the HypA/HybF family.

In terms of biological role, involved in the maturation of [NiFe] hydrogenases. Required for nickel insertion into the metal center of the hydrogenase. The polypeptide is Hydrogenase maturation factor HypA (Methanococcus aeolicus (strain ATCC BAA-1280 / DSM 17508 / OCM 812 / Nankai-3)).